The chain runs to 389 residues: Cytochrome B translational activator CBS2 (389 aa).

The protein localises to the mitochondrion. Translational activator of cytochrome b. The cytochrome b (coB) leader RNA may represent the target sequence for CBS1 and/ or CBS2. The chain is Cytochrome B translational activator CBS2 (CBS2) from Saccharomyces cerevisiae (strain ATCC 204508 / S288c) (Baker's yeast).